Here is a 652-residue protein sequence, read N- to C-terminus: Probable serine/threonine-protein kinase mkcD (652 aa).

Disordered stretches follow at residues 1–47 (MNNI…RKNK), 163–198 (NPIDENDKINSKSINDGDDNGGGSGGGGDNSPLTNV), and 257–289 (QQKLKQEQQQEQQQQQEDEPNKSPVSTSSTLSP). Positions 182–191 (NGGGSGGGGD) are enriched in gly residues. Residues 231-275 (KNNQNLHHKQQQLQQLQQLKQQHLQQQQKLKQEQQQEQQQQQEDE) adopt a coiled-coil conformation. A compositionally biased stretch (low complexity) spans 257–271 (QQKLKQEQQQEQQQQ). Positions 279-289 (SPVSTSSTLSP) are enriched in polar residues. One can recognise a Protein kinase domain in the interval 369 to 626 (FKNLDFEARG…SSQLLQHPFL (258 aa)). ATP-binding positions include 375 to 383 (EARGGFGSV) and K403. The Proton acceptor role is filled by D494.

The protein belongs to the protein kinase superfamily. STE Ser/Thr protein kinase family. STE20 subfamily. Mg(2+) serves as cofactor.

The enzyme catalyses L-seryl-[protein] + ATP = O-phospho-L-seryl-[protein] + ADP + H(+). It catalyses the reaction L-threonyl-[protein] + ATP = O-phospho-L-threonyl-[protein] + ADP + H(+). The polypeptide is Probable serine/threonine-protein kinase mkcD (Dictyostelium discoideum (Social amoeba)).